A 337-amino-acid chain; its full sequence is Anthranilate phosphoribosyltransferase (337 aa).

5-phospho-alpha-D-ribose 1-diphosphate contacts are provided by residues Gly-80, 83–84, Thr-88, 90–93, 108–116, and Ser-120; these read GD, NIST, and KHGNRSVSS. Residue Gly-80 coordinates anthranilate. A Mg(2+)-binding site is contributed by Ser-92. Asn-111 is an anthranilate binding site. Arg-166 provides a ligand contact to anthranilate. Mg(2+) is bound by residues Asp-225 and Glu-226.

Belongs to the anthranilate phosphoribosyltransferase family. As to quaternary structure, homodimer. Mg(2+) serves as cofactor.

The catalysed reaction is N-(5-phospho-beta-D-ribosyl)anthranilate + diphosphate = 5-phospho-alpha-D-ribose 1-diphosphate + anthranilate. It functions in the pathway amino-acid biosynthesis; L-tryptophan biosynthesis; L-tryptophan from chorismate: step 2/5. Functionally, catalyzes the transfer of the phosphoribosyl group of 5-phosphorylribose-1-pyrophosphate (PRPP) to anthranilate to yield N-(5'-phosphoribosyl)-anthranilate (PRA). This chain is Anthranilate phosphoribosyltransferase, found in Syntrophobacter fumaroxidans (strain DSM 10017 / MPOB).